The following is a 310-amino-acid chain: Aspartate carbamoyltransferase catalytic subunit (310 aa).

Residues arginine 57 and threonine 58 each coordinate carbamoyl phosphate. Lysine 86 contributes to the L-aspartate binding site. Positions 107, 135, and 138 each coordinate carbamoyl phosphate. L-aspartate is bound by residues arginine 168 and arginine 229. Carbamoyl phosphate contacts are provided by leucine 268 and proline 269.

It belongs to the aspartate/ornithine carbamoyltransferase superfamily. ATCase family. As to quaternary structure, heterooligomer of catalytic and regulatory chains.

It catalyses the reaction carbamoyl phosphate + L-aspartate = N-carbamoyl-L-aspartate + phosphate + H(+). Its pathway is pyrimidine metabolism; UMP biosynthesis via de novo pathway; (S)-dihydroorotate from bicarbonate: step 2/3. Catalyzes the condensation of carbamoyl phosphate and aspartate to form carbamoyl aspartate and inorganic phosphate, the committed step in the de novo pyrimidine nucleotide biosynthesis pathway. In Thermococcus onnurineus (strain NA1), this protein is Aspartate carbamoyltransferase catalytic subunit.